Consider the following 461-residue polypeptide: Polycomb group protein FIE1 (461 aa).

Basic residues predominate over residues 1 to 11; it reads MPPSKARRKRS. The segment at 1–56 is disordered; that stretch reads MPPSKARRKRSLRDITATVATGTVANSKPGSSSTNEGKQQDKKKEGPQEPDIPPLP. Positions 18–37 are enriched in polar residues; it reads TVATGTVANSKPGSSSTNEG. Residues 38–47 are compositionally biased toward basic and acidic residues; that stretch reads KQQDKKKEGP. WD repeat units follow at residues 143 to 186, 189 to 229, 235 to 275, 301 to 338, 351 to 391, and 398 to 437; these read DKDE…LDKS, GHGG…CILV, GHRH…IYVE, VHSDYVDCTRWLGDFILSKSVKNAVLLWEPKPDKRRPG, PKCS…PVLI, and ECKSPIRQTAVSFDGSTILGAADDGAIWRWDEVDPAASSS. The segment at 429 to 461 is disordered; the sequence is EVDPAASSSKPDQAAAPAAGVGAGAGADADADA. Residues 432-448 show a composition bias toward low complexity; the sequence is PAASSSKPDQAAAPAAG.

The protein belongs to the WD repeat ESC family. As to expression, specifically expressed in kernel starting from 6 days after pollination.

The protein resides in the nucleus. Polycomb group (PcG) protein. PcG proteins act by forming multiprotein complexes, which are required to maintain the transcriptionally repressive state of homeotic genes throughout development. PcG proteins are not required to initiate repression, but to maintain it during later stages of development. They probably act via the methylation of histones, rendering chromatin heritably changed in its expressibility. In Zea mays (Maize), this protein is Polycomb group protein FIE1 (FIE1).